The primary structure comprises 950 residues: Oxysterol-binding protein-related protein 1 (950 aa).

An interaction with RAB7A region spans residues 1–237 (MNTEAEQQLL…NKVIYKALKR (237 aa)). ANK repeat units follow at residues 47–76 (LGWT…EVNV), 80–109 (MGDT…DTTI), and 175–204 (LGNT…DPNL). The region spanning 235–334 (LKRYEGPLWK…WLEAIEEHSA (100 aa)) is the PH domain. The stretch at 430–463 (NFKLEQEQEKNKILSEALETLATEHHELEQSLVK) forms a coiled coil. Positions 469-485 (SILSEDEFYDALSDSES) match the FFAT motif. The residue at position 499 (serine 499) is a Phosphoserine. Residues 501–521 (EEEGEHLGSRKHRMSEEKDCG) are compositionally biased toward basic and acidic residues. Disordered regions lie at residues 501–527 (EEEG…DALS), 795–816 (KKNT…LDEM), and 881–913 (MENG…SEED). Residues 877 to 913 (DIRAMENGEIDQASEEKKRLEEKQRAARKNRSKSEED) adopt a coiled-coil conformation. Basic and acidic residues predominate over residues 890 to 901 (SEEKKRLEEKQR).

This sequence belongs to the OSBP family. As to quaternary structure, interacts (via FFAT motif) with VAPA and VAPB. Interacts with the GTP-bound form of RAB7A. Interacts with OAS1B. Interacts (via FFAT motif) with MOSPD2 (via MSP domain).

The protein resides in the late endosome. Its function is as follows. Binds phospholipids; exhibits strong binding to phosphatidic acid and weak binding to phosphatidylinositol 3-phosphate. Stabilizes GTP-bound RAB7A on late endosomes/lysosomes and alters functional properties of late endocytic compartments via its interaction with RAB7A. Binds 25-hydroxycholesterol and cholesterol. This is Oxysterol-binding protein-related protein 1 from Homo sapiens (Human).